Reading from the N-terminus, the 210-residue chain is Guanylate kinase (210 aa).

The Guanylate kinase-like domain maps to 6 to 186; that stretch reads GLLGIISAPS…ALIYLQSVIL (181 aa). 13–20 provides a ligand contact to ATP; it reads APSGAGKS.

This sequence belongs to the guanylate kinase family.

The protein resides in the cytoplasm. It carries out the reaction GMP + ATP = GDP + ADP. Essential for recycling GMP and indirectly, cGMP. In Blochmanniella floridana, this protein is Guanylate kinase.